The primary structure comprises 437 residues: UDP-N-acetylmuramate--L-alanine ligase (437 aa).

114-120 (GTHGKTS) provides a ligand contact to ATP.

Belongs to the MurCDEF family.

The protein resides in the cytoplasm. The enzyme catalyses UDP-N-acetyl-alpha-D-muramate + L-alanine + ATP = UDP-N-acetyl-alpha-D-muramoyl-L-alanine + ADP + phosphate + H(+). The protein operates within cell wall biogenesis; peptidoglycan biosynthesis. Functionally, cell wall formation. The polypeptide is UDP-N-acetylmuramate--L-alanine ligase (Lactobacillus johnsonii (strain CNCM I-12250 / La1 / NCC 533)).